We begin with the raw amino-acid sequence, 282 residues long: Shikimate dehydrogenase (NADP(+)) (282 aa).

Residues 24-26 and Thr-71 contribute to the shikimate site; that span reads SRS. Catalysis depends on Lys-75, which acts as the Proton acceptor. Asp-87 contacts NADP(+). Positions 96 and 112 each coordinate shikimate. NADP(+) contacts are provided by residues 138-142, 162-167, and Leu-227; these read GAGGA and NRTRIR. Tyr-229 contacts shikimate. NADP(+) is bound at residue Gly-250.

This sequence belongs to the shikimate dehydrogenase family. As to quaternary structure, homodimer.

It catalyses the reaction shikimate + NADP(+) = 3-dehydroshikimate + NADPH + H(+). Its pathway is metabolic intermediate biosynthesis; chorismate biosynthesis; chorismate from D-erythrose 4-phosphate and phosphoenolpyruvate: step 4/7. Functionally, involved in the biosynthesis of the chorismate, which leads to the biosynthesis of aromatic amino acids. Catalyzes the reversible NADPH linked reduction of 3-dehydroshikimate (DHSA) to yield shikimate (SA). This Paracoccus denitrificans (strain Pd 1222) protein is Shikimate dehydrogenase (NADP(+)).